A 224-amino-acid polypeptide reads, in one-letter code: Ribonuclease T (224 aa).

The region spanning 32 to 206 (VVVDVETGGF…YDTEKTAELF (175 aa)) is the Exonuclease domain. The Mg(2+) site is built by Asp-35, Glu-37, His-193, and Asp-198. Residue His-193 is the Proton donor/acceptor of the active site.

This sequence belongs to the RNase T family. Homodimer. It depends on Mg(2+) as a cofactor.

Functionally, trims short 3' overhangs of a variety of RNA species, leaving a one or two nucleotide 3' overhang. Responsible for the end-turnover of tRNA: specifically removes the terminal AMP residue from uncharged tRNA (tRNA-C-C-A). Also appears to be involved in tRNA biosynthesis. The polypeptide is Ribonuclease T (Pseudomonas paraeruginosa (strain DSM 24068 / PA7) (Pseudomonas aeruginosa (strain PA7))).